Here is a 476-residue protein sequence, read N- to C-terminus: Neuropeptide-like precursor 1 (476 aa).

An N-terminal signal peptide occupies residues 1–34 (MNDAGASIGRHRGCLLLFVALAVAFSSYVEQVES). V133 bears the Valine amide mark. Propeptides lie at residues 160-232 (DEAT…NSYF) and 259-476 (YVMP…RKNQ). Disordered regions lie at residues 275 to 298 (QNDIDGEKRSVDDDDDDDDDDGEV) and 360 to 385 (PEVESPVDPDDADIPPPPVPAHSHPT). The span at 286 to 297 (DDDDDDDDDDGE) shows a compositional bias: acidic residues.

Neuropeptide-like precursor 1-1: Expressed in antennal lobe (AL), corpora cardiaca (CC), corpora allata (CA) and gnathal ganglion (GNG) (at protein level). Expression in AL detected in all animals, in GNG in most animals, expression in CC and CA in few animals (at protein level). Neuropeptide-like precursor 1-2: Expressed in antennal lobe (AL), corpora cardiaca (CC), corpora allata (CA) and gnathal ganglion (GNG) (at protein level). Expression in AL detected in all animals, in GNG in some animals, expression in CC and CA in few animals (at protein level). Neuropeptide-like precursor 1-3: Not expressed in antennal lobe (AL), corpora cardiaca (CC), corpora allata (CA) and gnathal ganglion (GNG) (at protein level). Neuropeptide-like precursor 1-4: Expressed in antennal lobe (AL) and gnathal ganglion (GNG) (at protein level). Expression in AL detected in most animals, in GNG in some animals (at protein level). Not expressed in CC and CA (at protein level). YRVamide: Expressed in antennal lobe (AL), corpora cardiaca (CC), corpora allata (CA) and gnathal ganglion (GNG) (at protein level). Expression in AL and GNG detected in most animals, expression in CC and CA in few animals (at protein level). Extended YRVamide: Expressed in antennal lobe (AL) and gnathal ganglion (GNG) (at protein level). Expression in AL detected in most animals, in GNG in some animals (at protein level). Not expressed in corpora cardiaca (CC) and corpora allata (CA) (at protein level). Neuropeptide-like precursor 1-6: Expressed in antennal lobe (AL), corpora cardiaca (CC), corpora allata (CA) and gnathal ganglion (GNG) (at protein level). Expression in GNG detected in all animals, expression in AL in most animals, in CC and CA in few animals (at protein level). Neuropeptide-like precursor 1-6(1-11): Expressed in antennal lobe (AL) and gnathal ganglion (GNG) in most animals (at protein level). Not expressed in corpora cardiaca (CC) and corpora allata (CA) (at protein level). Neuropeptide-like precursor 1-9: Expressed in antennal lobe (AL) and gnathal ganglion (GNG) (at protein level). Expression in AL detected in all animals in GNG in most (at protein level). Not expressed in corpora cardiaca (CC) and corpora allata (CA) (at protein level).

It is found in the secreted. The polypeptide is Neuropeptide-like precursor 1 (Agrotis ipsilon (Black cutworm moth)).